A 128-amino-acid chain; its full sequence is L-ectoine synthase (128 aa).

The protein belongs to the ectoine synthase family.

The enzyme catalyses (2S)-4-acetamido-2-aminobutanoate = L-ectoine + H2O. Its pathway is amine and polyamine biosynthesis; ectoine biosynthesis; L-ectoine from L-aspartate 4-semialdehyde: step 3/3. In terms of biological role, catalyzes the circularization of gamma-N-acetyl-alpha,gamma-diaminobutyric acid (ADABA) to ectoine (1,4,5,6-tetrahydro-2-methyl-4-pyrimidine carboxylic acid), which is an excellent osmoprotectant. This is L-ectoine synthase from Vibrio campbellii (strain ATCC BAA-1116).